Here is a 361-residue protein sequence, read N- to C-terminus: Peptide chain release factor 1 (361 aa).

N5-methylglutamine is present on Gln236.

This sequence belongs to the prokaryotic/mitochondrial release factor family. Post-translationally, methylated by PrmC. Methylation increases the termination efficiency of RF1.

The protein localises to the cytoplasm. Functionally, peptide chain release factor 1 directs the termination of translation in response to the peptide chain termination codons UAG and UAA. This is Peptide chain release factor 1 from Lactobacillus acidophilus (strain ATCC 700396 / NCK56 / N2 / NCFM).